Reading from the N-terminus, the 209-residue chain is Glutathione S-transferase 1-1 (209 aa).

Positions Met-1–Asp-81 constitute a GST N-terminal domain. Glutathione-binding positions include Ser-10, His-51–Ile-53, and Glu-65–Arg-67. The GST C-terminal domain maps to Cys-87–Glu-209.

The protein belongs to the GST superfamily. Theta family. In terms of assembly, homodimer.

The enzyme catalyses RX + glutathione = an S-substituted glutathione + a halide anion + H(+). It catalyses the reaction 1,1,1-trichloro-2,2-bis(4-chlorophenyl)ethane = 1,1-dichloro-2,2-bis(4-chlorophenyl)ethylene + chloride + H(+). Its function is as follows. Conjugation of reduced glutathione to a wide number of exogenous and endogenous hydrophobic electrophiles. Has DDT dehydrochlorinase activity. This chain is Glutathione S-transferase 1-1 (GstD1), found in Drosophila sechellia (Fruit fly).